The sequence spans 208 residues: Thiamine-phosphate synthase (208 aa).

4-amino-2-methyl-5-(diphosphooxymethyl)pyrimidine is bound by residues 37 to 39 and asparagine 70; that span reads QVR. Residues aspartate 71 and aspartate 90 each coordinate Mg(2+). Residue threonine 109 coordinates 4-amino-2-methyl-5-(diphosphooxymethyl)pyrimidine. 135–137 lines the 2-[(2R,5Z)-2-carboxy-4-methylthiazol-5(2H)-ylidene]ethyl phosphate pocket; the sequence is TTS. A 4-amino-2-methyl-5-(diphosphooxymethyl)pyrimidine-binding site is contributed by lysine 138. Glycine 166 contacts 2-[(2R,5Z)-2-carboxy-4-methylthiazol-5(2H)-ylidene]ethyl phosphate.

This sequence belongs to the thiamine-phosphate synthase family. Requires Mg(2+) as cofactor.

It carries out the reaction 2-[(2R,5Z)-2-carboxy-4-methylthiazol-5(2H)-ylidene]ethyl phosphate + 4-amino-2-methyl-5-(diphosphooxymethyl)pyrimidine + 2 H(+) = thiamine phosphate + CO2 + diphosphate. The enzyme catalyses 2-(2-carboxy-4-methylthiazol-5-yl)ethyl phosphate + 4-amino-2-methyl-5-(diphosphooxymethyl)pyrimidine + 2 H(+) = thiamine phosphate + CO2 + diphosphate. The catalysed reaction is 4-methyl-5-(2-phosphooxyethyl)-thiazole + 4-amino-2-methyl-5-(diphosphooxymethyl)pyrimidine + H(+) = thiamine phosphate + diphosphate. It functions in the pathway cofactor biosynthesis; thiamine diphosphate biosynthesis; thiamine phosphate from 4-amino-2-methyl-5-diphosphomethylpyrimidine and 4-methyl-5-(2-phosphoethyl)-thiazole: step 1/1. Its function is as follows. Condenses 4-methyl-5-(beta-hydroxyethyl)thiazole monophosphate (THZ-P) and 2-methyl-4-amino-5-hydroxymethyl pyrimidine pyrophosphate (HMP-PP) to form thiamine monophosphate (TMP). In Salinispora arenicola (strain CNS-205), this protein is Thiamine-phosphate synthase.